The following is a 143-amino-acid chain: Large ribosomal subunit protein uL11 (143 aa).

It belongs to the universal ribosomal protein uL11 family. As to quaternary structure, part of the ribosomal stalk of the 50S ribosomal subunit. Interacts with L10 and the large rRNA to form the base of the stalk. L10 forms an elongated spine to which L12 dimers bind in a sequential fashion forming a multimeric L10(L12)X complex. Post-translationally, one or more lysine residues are methylated.

Forms part of the ribosomal stalk which helps the ribosome interact with GTP-bound translation factors. This Paracidovorax citrulli (strain AAC00-1) (Acidovorax citrulli) protein is Large ribosomal subunit protein uL11.